Reading from the N-terminus, the 35-residue chain is Photosystem II reaction center protein M (35 aa).

Residues 7–27 (GFIASILFVLVPTVFLLILFI) traverse the membrane as a helical segment.

It belongs to the PsbM family. As to quaternary structure, PSII is composed of 1 copy each of membrane proteins PsbA, PsbB, PsbC, PsbD, PsbE, PsbF, PsbH, PsbI, PsbJ, PsbK, PsbL, PsbM, PsbT, PsbX, PsbY, PsbZ, Psb30/Ycf12, peripheral proteins PsbO, CyanoQ (PsbQ), PsbU, PsbV and a large number of cofactors. It forms dimeric complexes.

It is found in the cellular thylakoid membrane. Its function is as follows. One of the components of the core complex of photosystem II (PSII). PSII is a light-driven water:plastoquinone oxidoreductase that uses light energy to abstract electrons from H(2)O, generating O(2) and a proton gradient subsequently used for ATP formation. It consists of a core antenna complex that captures photons, and an electron transfer chain that converts photonic excitation into a charge separation. This subunit is found at the monomer-monomer interface. This is Photosystem II reaction center protein M from Microcystis aeruginosa (strain NIES-843 / IAM M-2473).